The following is a 235-amino-acid chain: tRNA1(Val) (adenine(37)-N6)-methyltransferase (235 aa).

It belongs to the methyltransferase superfamily. tRNA (adenine-N(6)-)-methyltransferase family.

It is found in the cytoplasm. It catalyses the reaction adenosine(37) in tRNA1(Val) + S-adenosyl-L-methionine = N(6)-methyladenosine(37) in tRNA1(Val) + S-adenosyl-L-homocysteine + H(+). Specifically methylates the adenine in position 37 of tRNA(1)(Val) (anticodon cmo5UAC). The sequence is that of tRNA1(Val) (adenine(37)-N6)-methyltransferase from Glaesserella parasuis serovar 5 (strain SH0165) (Haemophilus parasuis).